Consider the following 427-residue polypeptide: Serine--tRNA ligase (427 aa).

Thr-231–Glu-233 contributes to the L-serine binding site. An ATP-binding site is contributed by Arg-262–Glu-264. L-serine is bound at residue Glu-285. Glu-349–Ser-352 provides a ligand contact to ATP. Ser-385 lines the L-serine pocket.

The protein belongs to the class-II aminoacyl-tRNA synthetase family. Type-1 seryl-tRNA synthetase subfamily. Homodimer. The tRNA molecule binds across the dimer.

The protein localises to the cytoplasm. It catalyses the reaction tRNA(Ser) + L-serine + ATP = L-seryl-tRNA(Ser) + AMP + diphosphate + H(+). The enzyme catalyses tRNA(Sec) + L-serine + ATP = L-seryl-tRNA(Sec) + AMP + diphosphate + H(+). The protein operates within aminoacyl-tRNA biosynthesis; selenocysteinyl-tRNA(Sec) biosynthesis; L-seryl-tRNA(Sec) from L-serine and tRNA(Sec): step 1/1. In terms of biological role, catalyzes the attachment of serine to tRNA(Ser). Is also able to aminoacylate tRNA(Sec) with serine, to form the misacylated tRNA L-seryl-tRNA(Sec), which will be further converted into selenocysteinyl-tRNA(Sec). This chain is Serine--tRNA ligase, found in Sinorhizobium fredii (strain NBRC 101917 / NGR234).